Here is a 1154-residue protein sequence, read N- to C-terminus: uncharacterized protein (1154 aa).

The signal sequence occupies residues 1–18 (MKRNIFIKLLISLLLLSS). Cys-19 is lipidated: N-palmitoyl cysteine. Cys-19 carries S-diacylglycerol cysteine lipidation. 4 helical membrane passes run 288 to 308 (ISVS…FLIG), 394 to 414 (LGFI…FLIF), 423 to 443 (ALIT…FMLF), and 458 to 478 (ISYA…SMII).

The protein belongs to the TrbL/VirB6 family.

Its subcellular location is the cell membrane. This is an uncharacterized protein from Rickettsia typhi (strain ATCC VR-144 / Wilmington).